The following is a 522-amino-acid chain: Subtilisin-like protease 10 (522 aa).

The first 19 residues, 1–19 (MFFFKGVVAVLSFFSAVNA), serve as a signal peptide directing secretion. Residues 20-117 (APFMKPNNGT…VERDQIGTSQ (98 aa)) constitute a propeptide that is removed on maturation. The 78-residue stretch at 36 to 113 (SYIVLLKRDI…HVAHVERDQI (78 aa)) folds into the Inhibitor I9 domain. The Peptidase S8 domain occupies 127 to 405 (NWGLGRLSNN…KLLVNGANGT (279 aa)). Active-site charge relay system residues include aspartate 159 and histidine 190. N-linked (GlcNAc...) asparagine glycosylation occurs at asparagine 251. Serine 348 acts as the Charge relay system in catalysis. Positions 384-397 (ASVKNPGPNTTNKL) are enriched in polar residues. The tract at residues 384–515 (ASVKNPGPNT…GWNRPMWWNR (132 aa)) is disordered. 2 N-linked (GlcNAc...) asparagine glycosylation sites follow: asparagine 392 and asparagine 403. Over residues 432 to 459 (SQNPPPGQNPPPGQNPPPEQPAPSPPAN) the composition is skewed to pro residues.

It belongs to the peptidase S8 family.

It localises to the secreted. Functionally, secreted subtilisin-like serine protease with keratinolytic activity that contributes to pathogenicity. This chain is Subtilisin-like protease 10 (SUB10), found in Arthroderma benhamiae (strain ATCC MYA-4681 / CBS 112371) (Trichophyton mentagrophytes).